The sequence spans 161 residues: Large ribosomal subunit protein eL21 (161 aa).

Belongs to the eukaryotic ribosomal protein eL21 family.

This Caenorhabditis elegans protein is Large ribosomal subunit protein eL21 (rpl-21).